Consider the following 295-residue polypeptide: UDP-N-acetylenolpyruvoylglucosamine reductase (295 aa).

An FAD-binding PCMH-type domain is found at 23 to 188; sequence KVGGPADFLA…ISAKFALKPG (166 aa). Residue Arg-167 is part of the active site. Catalysis depends on Ser-217, which acts as the Proton donor. Residue Glu-287 is part of the active site.

This sequence belongs to the MurB family. FAD is required as a cofactor.

The protein localises to the cytoplasm. It carries out the reaction UDP-N-acetyl-alpha-D-muramate + NADP(+) = UDP-N-acetyl-3-O-(1-carboxyvinyl)-alpha-D-glucosamine + NADPH + H(+). It participates in cell wall biogenesis; peptidoglycan biosynthesis. Functionally, cell wall formation. This chain is UDP-N-acetylenolpyruvoylglucosamine reductase, found in Streptococcus pyogenes serotype M3 (strain ATCC BAA-595 / MGAS315).